A 369-amino-acid polypeptide reads, in one-letter code: Dual-specificity RNA methyltransferase RlmN (369 aa).

E96 acts as the Proton acceptor in catalysis. The Radical SAM core domain occupies 102-338 (DGERGTLCVS…VTTIRTTRGD (237 aa)). C109 and C344 are joined by a disulfide. Positions 116, 120, and 123 each coordinate [4Fe-4S] cluster. S-adenosyl-L-methionine contacts are provided by residues 169–170 (GE), S201, 223–225 (SLH), and N301. The S-methylcysteine intermediate role is filled by C344.

This sequence belongs to the radical SAM superfamily. RlmN family. [4Fe-4S] cluster serves as cofactor.

The protein localises to the cytoplasm. It carries out the reaction adenosine(2503) in 23S rRNA + 2 reduced [2Fe-2S]-[ferredoxin] + 2 S-adenosyl-L-methionine = 2-methyladenosine(2503) in 23S rRNA + 5'-deoxyadenosine + L-methionine + 2 oxidized [2Fe-2S]-[ferredoxin] + S-adenosyl-L-homocysteine. The catalysed reaction is adenosine(37) in tRNA + 2 reduced [2Fe-2S]-[ferredoxin] + 2 S-adenosyl-L-methionine = 2-methyladenosine(37) in tRNA + 5'-deoxyadenosine + L-methionine + 2 oxidized [2Fe-2S]-[ferredoxin] + S-adenosyl-L-homocysteine. Specifically methylates position 2 of adenine 2503 in 23S rRNA and position 2 of adenine 37 in tRNAs. m2A2503 modification seems to play a crucial role in the proofreading step occurring at the peptidyl transferase center and thus would serve to optimize ribosomal fidelity. In Marinobacter nauticus (strain ATCC 700491 / DSM 11845 / VT8) (Marinobacter aquaeolei), this protein is Dual-specificity RNA methyltransferase RlmN.